A 358-amino-acid chain; its full sequence is 3-isopropylmalate dehydrogenase (358 aa).

Positions 92, 102, 130, and 224 each coordinate substrate. Mg(2+) is bound by residues aspartate 224, aspartate 248, and aspartate 252. Residue 282–294 coordinates NAD(+); sequence GSAPDIAGQGIAN.

It belongs to the isocitrate and isopropylmalate dehydrogenases family. LeuB type 1 subfamily. In terms of assembly, homodimer. Mg(2+) is required as a cofactor. Mn(2+) serves as cofactor.

The protein localises to the cytoplasm. The enzyme catalyses (2R,3S)-3-isopropylmalate + NAD(+) = 4-methyl-2-oxopentanoate + CO2 + NADH. The protein operates within amino-acid biosynthesis; L-leucine biosynthesis; L-leucine from 3-methyl-2-oxobutanoate: step 3/4. Its function is as follows. Catalyzes the oxidation of 3-carboxy-2-hydroxy-4-methylpentanoate (3-isopropylmalate) to 3-carboxy-4-methyl-2-oxopentanoate. The product decarboxylates to 4-methyl-2 oxopentanoate. This chain is 3-isopropylmalate dehydrogenase, found in Bordetella pertussis (strain Tohama I / ATCC BAA-589 / NCTC 13251).